The chain runs to 940 residues: Valine--tRNA ligase (940 aa).

A 'HIGH' region motif is present at residues 47-57; sequence PNVTGILHMGH. The 'KMSKS' region signature appears at 564–568; sequence KLSKS. Residue lysine 567 coordinates ATP. A coiled-coil region spans residues 872-938; it reads PIEQITKEKN…LQSILDKLAS (67 aa).

This sequence belongs to the class-I aminoacyl-tRNA synthetase family. ValS type 1 subfamily. In terms of assembly, monomer.

Its subcellular location is the cytoplasm. The enzyme catalyses tRNA(Val) + L-valine + ATP = L-valyl-tRNA(Val) + AMP + diphosphate. In terms of biological role, catalyzes the attachment of valine to tRNA(Val). As ValRS can inadvertently accommodate and process structurally similar amino acids such as threonine, to avoid such errors, it has a 'posttransfer' editing activity that hydrolyzes mischarged Thr-tRNA(Val) in a tRNA-dependent manner. In Chlamydia felis (strain Fe/C-56) (Chlamydophila felis), this protein is Valine--tRNA ligase.